Here is a 217-residue protein sequence, read N- to C-terminus: Large ribosomal subunit protein uL4 (217 aa).

The segment at 42–100 (RAAARQGTHSTKTRGDVSGGGRKPYRQKGTGRARQGSTRAPQFTGGGVVHGPKPRDYSQ) is disordered.

This sequence belongs to the universal ribosomal protein uL4 family. Part of the 50S ribosomal subunit.

Functionally, one of the primary rRNA binding proteins, this protein initially binds near the 5'-end of the 23S rRNA. It is important during the early stages of 50S assembly. It makes multiple contacts with different domains of the 23S rRNA in the assembled 50S subunit and ribosome. Its function is as follows. Forms part of the polypeptide exit tunnel. The sequence is that of Large ribosomal subunit protein uL4 from Mycolicibacterium paratuberculosis (strain ATCC BAA-968 / K-10) (Mycobacterium paratuberculosis).